The chain runs to 348 residues: Spore development regulator vosA (348 aa).

A Velvet domain is found at 46-244 (ALSPSSCFLS…SDQGVRLRLR (199 aa)). The interval 250 to 294 (MMSNKRSISGSGDLTSDQSQQQQQQQPLAKKRREDSVESANPSSL) is disordered. The segment covering 253–266 (NKRSISGSGDLTSD) has biased composition (polar residues). Residues 274–280 (QQPLAKK) carry the Nuclear localization signal motif.

The protein belongs to the velvet family. VosA subfamily. As to quaternary structure, forms a heterodimeric complex with VEL2; the formation of the VEL2-VOS1 complex is light-dependent.

It is found in the nucleus. Functionally, component of the velB-VosA heterodimeric complex that plays a dual role in activating genes associated with spore maturation and repressing certain development-associated genes. The complex binds DNA through the DNA-binding domain of vosA that recognizes an 11-nucleotide consensus sequence 5'-CTGGCCGCGGC-3' consisting of two motifs in the promoters of key developmental regulatory genes. Regulates spore viability, trehalose accumulation, and tolerance to thermal and oxidative as well as ion stresses. Positively regulates conidial pigmentation and pathogenicity on barley. This is Spore development regulator vosA from Cochliobolus sativus (strain ND90Pr / ATCC 201652) (Common root rot and spot blotch fungus).